The sequence spans 374 residues: DNA integrity scanning protein DisA (374 aa).

Positions 20–158 (EALMRASLSA…DGERRVLEES (139 aa)) constitute a DAC domain. ATP contacts are provided by residues glycine 87, leucine 105, and 118–122 (TRHRT).

The protein belongs to the DisA family. Homooctamer. It depends on Mg(2+) as a cofactor.

It carries out the reaction 2 ATP = 3',3'-c-di-AMP + 2 diphosphate. Functionally, participates in a DNA-damage check-point that is active prior to asymmetric division when DNA is damaged. DisA forms globular foci that rapidly scan along the chromosomes during sporulation, searching for lesions. When a lesion is present, DisA pauses at the lesion site. This triggers a cellular response that culminates in a temporary block in sporulation initiation. Also has diadenylate cyclase activity, catalyzing the condensation of 2 ATP molecules into cyclic di-AMP (c-di-AMP). c-di-AMP acts as a signaling molecule that couples DNA integrity with progression of sporulation. The rise in c-di-AMP level generated by DisA while scanning the chromosome, operates as a positive signal that advances sporulation; upon encountering a lesion, the DisA focus arrests at the damaged site and halts c-di-AMP synthesis. This Streptomyces griseus subsp. griseus (strain JCM 4626 / CBS 651.72 / NBRC 13350 / KCC S-0626 / ISP 5235) protein is DNA integrity scanning protein DisA.